Reading from the N-terminus, the 919-residue chain is Phosphoenolpyruvate carboxylase (919 aa).

Active-site residues include histidine 138 and lysine 579.

It belongs to the PEPCase type 1 family. Requires Mg(2+) as cofactor.

The enzyme catalyses oxaloacetate + phosphate = phosphoenolpyruvate + hydrogencarbonate. With respect to regulation, activity not stimulated by acetyl-CoA in the absence of any allosteric inhibitor, while the corresponding protein from E.coli is strongly stimulated. Functionally, forms oxaloacetate, a four-carbon dicarboxylic acid source for the tricarboxylic acid cycle. The chain is Phosphoenolpyruvate carboxylase (ppc) from Corynebacterium glutamicum (strain ATCC 13032 / DSM 20300 / JCM 1318 / BCRC 11384 / CCUG 27702 / LMG 3730 / NBRC 12168 / NCIMB 10025 / NRRL B-2784 / 534).